The primary structure comprises 306 residues: Voltage-dependent anion channel-forming protein RSc3414 (306 aa).

The next 4 helical transmembrane spans lie at 28-48 (LFLIFCISLVAMAVHVHWLPI), 50-70 (VNLSTTPFSLIGIALAVFLGF), 213-233 (YSVMIHRTVYFFCAALPFGLV), and 239-259 (FTPVFSVFVAYAFMAHEAIAA).

Belongs to the anion channel-forming bestrophin (TC 1.A.46) family.

It localises to the cell membrane. This chain is Voltage-dependent anion channel-forming protein RSc3414, found in Ralstonia nicotianae (strain ATCC BAA-1114 / GMI1000) (Ralstonia solanacearum).